The sequence spans 275 residues: Taurine transport system permease protein TauC (275 aa).

7 helical membrane-spanning segments follow: residues 20-42 (LSRQVTLSIGTLAVLLTVWWTVA), 87-107 (IMLALFAAVLFGIPVGIAMGL), 124-144 (PVPPLAYLPLMVIWFGIGETS), 146-166 (ILLIYLAIFAPVAMSALAGVK), 186-206 (VLWFVILPGALPEILTGLRIG), 209-229 (VGWSTLVAAELIAATRGLGFM), and 236-256 (FLATDVVLAGIAVIAIIAFLL). The ABC transmembrane type-1 domain occupies 80–264 (LAASLTRIML…LLELGLRALQ (185 aa)).

This sequence belongs to the binding-protein-dependent transport system permease family. CysTW subfamily.

The protein resides in the cell inner membrane. Its function is as follows. Part of a binding-protein-dependent transport system for taurine. Probably responsible for the translocation of the substrate across the membrane. This is Taurine transport system permease protein TauC (tauC) from Escherichia coli (strain K12).